Reading from the N-terminus, the 235-residue chain is Phosphoribosylaminoimidazole-succinocarboxamide synthase (235 aa).

The protein belongs to the SAICAR synthetase family.

The catalysed reaction is 5-amino-1-(5-phospho-D-ribosyl)imidazole-4-carboxylate + L-aspartate + ATP = (2S)-2-[5-amino-1-(5-phospho-beta-D-ribosyl)imidazole-4-carboxamido]succinate + ADP + phosphate + 2 H(+). Its pathway is purine metabolism; IMP biosynthesis via de novo pathway; 5-amino-1-(5-phospho-D-ribosyl)imidazole-4-carboxamide from 5-amino-1-(5-phospho-D-ribosyl)imidazole-4-carboxylate: step 1/2. The polypeptide is Phosphoribosylaminoimidazole-succinocarboxamide synthase (Clostridium botulinum (strain Alaska E43 / Type E3)).